The following is a 119-amino-acid chain: Ribonuclease P protein component (119 aa).

The protein belongs to the RnpA family. In terms of assembly, consists of a catalytic RNA component (M1 or rnpB) and a protein subunit.

It carries out the reaction Endonucleolytic cleavage of RNA, removing 5'-extranucleotides from tRNA precursor.. Its function is as follows. RNaseP catalyzes the removal of the 5'-leader sequence from pre-tRNA to produce the mature 5'-terminus. It can also cleave other RNA substrates such as 4.5S RNA. The protein component plays an auxiliary but essential role in vivo by binding to the 5'-leader sequence and broadening the substrate specificity of the ribozyme. The protein is Ribonuclease P protein component of Nitrosomonas europaea (strain ATCC 19718 / CIP 103999 / KCTC 2705 / NBRC 14298).